The sequence spans 97 residues: Integration host factor subunit alpha (97 aa).

Belongs to the bacterial histone-like protein family. Heterodimer of an alpha and a beta chain.

Its function is as follows. This protein is one of the two subunits of integration host factor, a specific DNA-binding protein that functions in genetic recombination as well as in transcriptional and translational control. The protein is Integration host factor subunit alpha of Acinetobacter baylyi (strain ATCC 33305 / BD413 / ADP1).